Reading from the N-terminus, the 192-residue chain is ATP synthase protein MI25 (192 aa).

Residues isoleucine 29–serine 49 form a helical membrane-spanning segment.

This sequence belongs to the ATPase protein MI25 family. In terms of assembly, F-type ATPases have 2 components, CF(1) - the catalytic core - and CF(0) - the membrane proton channel. CF(1) has five subunits: alpha(3), beta(3), gamma(1), delta(1), epsilon(1). CF(0) has three main subunits: a, b and c.

It is found in the mitochondrion membrane. In terms of biological role, this is one of the chains of the nonenzymatic component (CF(0) subunit) of the mitochondrial ATPase complex. This chain is ATP synthase protein MI25, found in Triticum timopheevii (Timopheev's wheat).